Here is an 884-residue protein sequence, read N- to C-terminus: Coatomer subunit gamma-1 (884 aa).

HEAT repeat units lie at residues 65-100, 101-138, 286-323, 325-357, and 358-395; these read VEAT…SPSS, DEVI…GTLL, RELA…TRPL, VTNC…TGNE, and SSVD…KFPL. Positions 592–612 are disordered; sequence QPLQEKKAPGKKPPAGAPAPA. Over residues 602–612 the composition is skewed to pro residues; the sequence is KKPPAGAPAPA.

It belongs to the COPG family. Oligomeric complex that consists of at least the alpha, beta, beta', gamma, delta, epsilon and zeta subunits.

Its subcellular location is the cytoplasm. It localises to the golgi apparatus membrane. The protein resides in the cytoplasmic vesicle. The protein localises to the COPI-coated vesicle membrane. In terms of biological role, the coatomer is a cytosolic protein complex that binds to dilysine motifs and reversibly associates with Golgi non-clathrin-coated vesicles, which further mediate biosynthetic protein transport from the ER, via the Golgi up to the trans Golgi network. Coatomer complex is required for budding from Golgi membranes, and is essential for the retrograde Golgi-to-ER transport of dilysine-tagged proteins. In Oryza sativa subsp. japonica (Rice), this protein is Coatomer subunit gamma-1.